Consider the following 153-residue polypeptide: Neuromedin-S (153 aa).

Positions 1–26 are cleaved as a signal peptide; it reads MKHPLPHYSPILFIYCFCMLQIPSSG. 3 propeptides span residues 27 to 69, 70 to 105, and 106 to 108; these read ASPP…VYKR, FLFHYSRTRKPTHPVSAEFAPVHPLMRLAAKLASRR, and MKR. Position 144 is an asparagine amide (Asn-144). Residues 147 to 153 constitute a propeptide that is removed on maturation; the sequence is YTDNNFQ.

The protein belongs to the NmU family.

It is found in the secreted. Its function is as follows. Implicated in the regulation of circadian rhythms through autocrine and/or paracrine actions. This chain is Neuromedin-S (Nms), found in Mus musculus (Mouse).